Reading from the N-terminus, the 301-residue chain is 4-hydroxy-tetrahydrodipicolinate synthase (301 aa).

Position 46 (Thr-46) interacts with pyruvate. The active-site Proton donor/acceptor is the Tyr-135. Lys-163 (schiff-base intermediate with substrate) is an active-site residue. Ile-205 lines the pyruvate pocket.

This sequence belongs to the DapA family. In terms of assembly, homotetramer; dimer of dimers.

The protein resides in the cytoplasm. It carries out the reaction L-aspartate 4-semialdehyde + pyruvate = (2S,4S)-4-hydroxy-2,3,4,5-tetrahydrodipicolinate + H2O + H(+). It functions in the pathway amino-acid biosynthesis; L-lysine biosynthesis via DAP pathway; (S)-tetrahydrodipicolinate from L-aspartate: step 3/4. Its function is as follows. Catalyzes the condensation of (S)-aspartate-beta-semialdehyde [(S)-ASA] and pyruvate to 4-hydroxy-tetrahydrodipicolinate (HTPA). This Lacticaseibacillus casei (strain BL23) (Lactobacillus casei) protein is 4-hydroxy-tetrahydrodipicolinate synthase.